Here is a 207-residue protein sequence, read N- to C-terminus: A-type ATP synthase subunit E (207 aa).

The protein belongs to the V-ATPase E subunit family. In terms of assembly, has multiple subunits with at least A(3), B(3), C, D, E, F, H, I and proteolipid K(x).

It is found in the cell membrane. In terms of biological role, component of the A-type ATP synthase that produces ATP from ADP in the presence of a proton gradient across the membrane. The chain is A-type ATP synthase subunit E from Hyperthermus butylicus (strain DSM 5456 / JCM 9403 / PLM1-5).